Here is an 86-residue protein sequence, read N- to C-terminus: UPF0297 protein SERP1181 (86 aa).

Belongs to the UPF0297 family.

This chain is UPF0297 protein SERP1181, found in Staphylococcus epidermidis (strain ATCC 35984 / DSM 28319 / BCRC 17069 / CCUG 31568 / BM 3577 / RP62A).